Consider the following 335-residue polypeptide: Trans-3-hydroxy-L-proline dehydratase (335 aa).

Cys91 serves as the catalytic Proton acceptor. Substrate contacts are provided by residues 92-93 (GH), His222, and 256-257 (GS).

This sequence belongs to the proline racemase family. In terms of assembly, homodimer.

The catalysed reaction is trans-3-hydroxy-L-proline = 1-pyrroline-2-carboxylate + H2O. Catalyzes the dehydration of trans-3-hydroxy-L-proline (t3LHyp) to Delta(1)-pyrroline-2-carboxylate (Pyr2C). Does not possess neither proline racemase nor 4-hydroxyproline 2-epimerase activities. The polypeptide is Trans-3-hydroxy-L-proline dehydratase (Burkholderia cenocepacia (strain HI2424)).